The sequence spans 182 residues: Alpha-S2-casein (182 aa).

The N-terminal stretch at 1–15 (MKFFIFTCLLAVALA) is a signal peptide. Phosphoserine occurs at positions 22, 23, and 24.

This sequence belongs to the alpha-casein family. As to expression, mammary gland specific. Secreted in milk.

The protein resides in the secreted. Its function is as follows. Important role in the capacity of milk to transport calcium phosphate. The chain is Alpha-S2-casein (CSN1S2) from Oryctolagus cuniculus (Rabbit).